Here is a 775-residue protein sequence, read N- to C-terminus: Glutamine--tRNA ligase (775 aa).

The residue at position 2 (A2) is an N-acetylalanine. S70 is modified (phosphoserine). ATP is bound by residues 271–273 (EPN) and 277–283 (HIGHAKA). D303 is a binding site for L-glutamine. K309 is modified (N6-acetyllysine). Residue Y438 participates in L-glutamine binding. ATP contacts are provided by residues T457, 486 to 487 (RL), and 494 to 496 (VSK). A Phosphoserine modification is found at S495.

This sequence belongs to the class-I aminoacyl-tRNA synthetase family. As to quaternary structure, monomer. Part of a multisubunit complex that groups tRNA ligases for Arg (RARS1), Asp (DARS1), Gln (QARS1), Ile (IARS1), Leu (LARS1), Lys (KARS1), Met (MARS1) the bifunctional ligase for Glu and Pro (EPRS1) and the auxiliary subunits AIMP1/p43, AIMP2/p38 and EEF1E1/p18. Interacts with RARS1. Part of a complex composed of RARS1, QARS1 and AIMP1. In terms of tissue distribution, detected in dorsal root ganglia (at protein level). Detected in dorsal root ganglia.

Its subcellular location is the cytoplasm. It localises to the cytosol. It carries out the reaction tRNA(Gln) + L-glutamine + ATP = L-glutaminyl-tRNA(Gln) + AMP + diphosphate. Functionally, glutamine--tRNA ligase. Plays a critical role in brain development. The polypeptide is Glutamine--tRNA ligase (Qars1) (Rattus norvegicus (Rat)).